The sequence spans 284 residues: Protoheme IX farnesyltransferase (284 aa).

Transmembrane regions (helical) follow at residues serine 2 to valine 19, isoleucine 23 to serine 45, glycine 69 to alanine 89, leucine 92 to tryptophan 112, isoleucine 121 to glycine 141, leucine 148 to phenylalanine 168, valine 194 to glycine 214, leucine 217 to tryptophan 237, and leucine 263 to glycine 283.

Belongs to the UbiA prenyltransferase family. Protoheme IX farnesyltransferase subfamily. In terms of assembly, interacts with CtaA.

It is found in the cell inner membrane. The catalysed reaction is heme b + (2E,6E)-farnesyl diphosphate + H2O = Fe(II)-heme o + diphosphate. It participates in porphyrin-containing compound metabolism; heme O biosynthesis; heme O from protoheme: step 1/1. Its function is as follows. Converts heme B (protoheme IX) to heme O by substitution of the vinyl group on carbon 2 of heme B porphyrin ring with a hydroxyethyl farnesyl side group. In Cereibacter sphaeroides (Rhodobacter sphaeroides), this protein is Protoheme IX farnesyltransferase.